The chain runs to 352 residues: Phosphate acetyltransferase (352 aa).

This sequence belongs to the phosphate acetyltransferase and butyryltransferase family.

Its subcellular location is the cytoplasm. It carries out the reaction acetyl-CoA + phosphate = acetyl phosphate + CoA. Its pathway is metabolic intermediate biosynthesis; acetyl-CoA biosynthesis; acetyl-CoA from acetate: step 2/2. The sequence is that of Phosphate acetyltransferase (pta) from Borreliella burgdorferi (strain ATCC 35210 / DSM 4680 / CIP 102532 / B31) (Borrelia burgdorferi).